The chain runs to 378 residues: Protein arginine N-methyltransferase 6 (378 aa).

The tract at residues 1–46 (MSLSKKRKLESGDSGGAGAGGEGAEEENGGEQEAAPPRPRRTKSER) is disordered. Over residues 13–22 (DSGGAGAGGE) the composition is skewed to gly residues. Arg-38 is subject to Asymmetric dimethylarginine; by autocatalysis. The 331-residue stretch at 47–377 (DQLYYECYSD…EEKTKDFAME (331 aa)) folds into the SAM-dependent MTase PRMT-type domain. Positions 60, 69, 93, 115, and 144 each coordinate S-adenosyl-L-methionine. Catalysis depends on residues Glu-158 and Glu-167.

This sequence belongs to the class I-like SAM-binding methyltransferase superfamily. Protein arginine N-methyltransferase family. PRMT6 subfamily. As to quaternary structure, interacts with (and methylates) HIV-1 Tat, Rev and Nucleocapsid protein p7 (NC). Interacts with EPB41L3 and NCOA1. Post-translationally, automethylation enhances its stability.

It is found in the nucleus. The enzyme catalyses L-arginyl-[protein] + 2 S-adenosyl-L-methionine = N(omega),N(omega)-dimethyl-L-arginyl-[protein] + 2 S-adenosyl-L-homocysteine + 2 H(+). Its function is as follows. Arginine methyltransferase that can catalyze the formation of both omega-N monomethylarginine (MMA) and asymmetrical dimethylarginine (aDMA), with a strong preference for the formation of aDMA. Preferentially methylates arginyl residues present in a glycine and arginine-rich domain and displays preference for monomethylated substrates. Specifically mediates the asymmetric dimethylation of histone H3 'Arg-2' to form H3R2me2a. H3R2me2a represents a specific tag for epigenetic transcriptional repression and is mutually exclusive with methylation on histone H3 'Lys-4' (H3K4me2 and H3K4me3). Acts as a transcriptional repressor of various genes such as HOXA2, THBS1 and TP53. Repression of TP53 blocks cellular senescence. Also methylates histone H2A and H4 'Arg-3' (H2AR3me and H4R3me, respectively). Acts as a regulator of DNA base excision during DNA repair by mediating the methylation of DNA polymerase beta (POLB), leading to the stimulation of its polymerase activity by enhancing DNA binding and processivity. Methylates HMGA1. Regulates alternative splicing events. Acts as a transcriptional coactivator of a number of steroid hormone receptors including ESR1, ESR2, PGR and NR3C1. Promotes fasting-induced transcriptional activation of the gluconeogenic program through methylation of the CRTC2 transcription coactivator. Methylates GPS2, protecting GPS2 from ubiquitination and degradation. Methylates SIRT7, inhibiting SIRT7 histone deacetylase activity and promoting mitochondria biogenesis. This chain is Protein arginine N-methyltransferase 6 (Prmt6), found in Mus musculus (Mouse).